The following is a 1051-amino-acid chain: Ubiquitin carboxyl-terminal hydrolase 28 (1051 aa).

The interval 60–82 is disordered; that stretch reads DQRVKEPSHDTTAAEPSEVEESA. The residue at position 67 (Ser67) is a Phosphoserine. The UIM domain occupies 97–116; the sequence is DNKDDLQAAIALSLLESPNI. Residue Lys99 forms a Glycyl lysine isopeptide (Lys-Gly) (interchain with G-Cter in SUMO2) linkage. The segment covering 121 to 135 has biased composition (basic and acidic residues); sequence RDLNRAHEANSAETK. The segment at 121-140 is disordered; that stretch reads RDLNRAHEANSAETKRSKRK. The USP domain occupies 162–655; the sequence is VGLKNVGNTC…SAYCLMYIND (494 aa). The active-site Nucleophile is Cys171. Ser376 bears the Phosphoserine mark. Residues 483 to 538 are disordered; sequence DLTPKESSSPESCSQNAGSTFSSPEDALPSSEGMNGPFTSPHSSLETPAPPAPRTV. 2 stretches are compositionally biased toward polar residues: residues 487–505 and 519–528; these read KESS…TFSS and PFTSPHSSLE. Residue Ser555 is modified to Phosphoserine. The active-site Proton acceptor is the His605. A disordered region spans residues 703–735; it reads EEQSCKIPQMESSPNSSSQDFSTSQESPAVSSH. The segment covering 713–730 has biased composition (low complexity); the sequence is ESSPNSSSQDFSTSQESP. The residue at position 720 (Ser720) is a Phosphoserine. A Phosphothreonine modification is found at Thr1022.

This sequence belongs to the peptidase C19 family. USP28 subfamily. As to quaternary structure, interacts with ZNF304. Interacts with PRKD1. Interacts with TP53BP1. Interacts with FBXW7; following DNA damage, dissociates from FBXW7 leading to degradation of MYC. Degraded upon nickel ion level or hypoxia exposure. Post-translationally, phosphorylated upon DNA damage at Ser-67 and Ser-720, by ATM or ATR. Phosphorylated by PRKD1.

The protein resides in the nucleus. Its subcellular location is the nucleoplasm. It catalyses the reaction Thiol-dependent hydrolysis of ester, thioester, amide, peptide and isopeptide bonds formed by the C-terminal Gly of ubiquitin (a 76-residue protein attached to proteins as an intracellular targeting signal).. Deubiquitinase involved in DNA damage response checkpoint and MYC proto-oncogene stability. Involved in DNA damage induced apoptosis by specifically deubiquitinating proteins of the DNA damage pathway such as CLSPN. Also involved in G2 DNA damage checkpoint, by deubiquitinating CLSPN, and preventing its degradation by the anaphase promoting complex/cyclosome (APC/C). In contrast, it does not deubiquitinate PLK1. Specifically deubiquitinates MYC in the nucleoplasm, leading to prevent MYC degradation by the proteasome: acts by specifically interacting with FBXW7 (FBW7alpha) in the nucleoplasm and counteracting ubiquitination of MYC by the SCF(FBXW7) complex. Deubiquitinates ZNF304, hence preventing ZNF304 degradation by the proteasome and leading to the activated KRAS-mediated promoter hypermethylation and transcriptional silencing of tumor suppressor genes (TSGs) in a subset of colorectal cancers (CRC) cells. The sequence is that of Ubiquitin carboxyl-terminal hydrolase 28 (Usp28) from Mus musculus (Mouse).